The following is a 371-amino-acid chain: Neuropeptide Y receptor type 6 (371 aa).

Residues 1–31 (MEVSLNDPASNKTSAKSNSSAFFYFESCQSP) are Extracellular-facing. Asparagine 11 and asparagine 18 each carry an N-linked (GlcNAc...) asparagine glycan. A helical transmembrane segment spans residues 32–52 (SLALLLLLIAYTVVLIMGICG). The Cytoplasmic segment spans residues 53–72 (NLSLITIIFKKQREAQNVTN). The helical transmembrane segment at 73–93 (ILIANLSLSDILVCVMCIPFT) threads the bilayer. The Extracellular portion of the chain corresponds to 94-111 (AIYTLMDRWIFGNTMCKL). A disulfide bridge links cysteine 109 with cysteine 196. Residues 112–132 (TSYVQSVSISVSIFSLVLIAI) traverse the membrane as a helical segment. Topologically, residues 133–150 (ERYQLIVNPRGWKPSASH) are cytoplasmic. The chain crosses the membrane as a helical span at residues 151-171 (AYWGIMLIWLFSLLLSIPLLL). Over 172–213 (SYHLTDEPFRNLSLPTDLYSHHVVCVEHWPSKTNQLLYSTSL) the chain is Extracellular. Asparagine 182 is a glycosylation site (N-linked (GlcNAc...) asparagine). Residues 214–234 (IMLQYFVPLGFMFICYLKIVI) form a helical membrane-spanning segment. Residues 235–263 (CLHKRNSKIDRRRENESRLTENKRINTML) are Cytoplasmic-facing. The helical transmembrane segment at 264–284 (ISIVVTFAACWLPLNTFNVIF) threads the bilayer. At 285 to 297 (DWYHEVLMSCHHD) the chain is on the extracellular side. Residues 298–318 (LVFAICHLVAMVSTCINPLFY) traverse the membrane as a helical segment. The Cytoplasmic portion of the chain corresponds to 319–371 (GFLNRNFQKDLVVLIHHCLCFALRERYENIAISTLHTDESKGSLRVAHIPAGI). Cysteine 336 carries the S-palmitoyl cysteine lipid modification.

This sequence belongs to the G-protein coupled receptor 1 family. As to expression, expressed in hippocampus, striatum, hypothalamus, cerebellum, small intestine, colon and adrenal gland.

It is found in the cell membrane. Receptor for neuropeptide Y and peptide YY. The activity of this receptor is mediated by G proteins that inhibit adenylate cyclase activity. The protein is Neuropeptide Y receptor type 6 (NPY6R) of Oryctolagus cuniculus (Rabbit).